Consider the following 496-residue polypeptide: MLKIKLEKTTFENAKAECSLVFITNKDFDHVWVKNKKLLETFKYEGEGAFLDQENKILYVGVKEDDVHLLRESACLAVRTLKKLAFKSVKVGVYTCDTHAKDNALLENLKALFLGLKLGLYEYDTFKPNKKESVLKEVIVALELHKHCEKTCANSLEKSAKEALKYAEIMTESLNIVRDLVNTPPMIGTPVYMAEVAQKVAKENHLEIHVHDEKFLEEKKMNAFLAVNKASLAVNPPRLIHLVYKPKKAKKKIALVGKGLTYDCGGLSLKPADYMVTMKADKGGGSAVIGLLNALAKLGVEAEVHGIIGATENMIGPAAYKPDDILISKEGKSIEVRNTDAEGRLVLADCLSYAQDLSPDVIVDFATLTGACVVGLGEFTSAIMGHNEELKNLFETSGLESGELLAKLPFNRHLKKLIESKIADVCNISSSRYGGAITAGLFLNEFIRDEFKDKWLHIDIAGPAYVEKEWDVNSFGASGAGVRACTAFVEELLKKA.

Residues Lys-258 and Asp-263 each coordinate Mn(2+). Lys-270 is an active-site residue. Mn(2+)-binding residues include Asp-281, Asp-340, and Glu-342. The active site involves Arg-344.

Belongs to the peptidase M17 family. The cofactor is Mn(2+).

Its subcellular location is the cytoplasm. It catalyses the reaction Release of an N-terminal amino acid, Xaa-|-Yaa-, in which Xaa is preferably Leu, but may be other amino acids including Pro although not Arg or Lys, and Yaa may be Pro. Amino acid amides and methyl esters are also readily hydrolyzed, but rates on arylamides are exceedingly low.. The enzyme catalyses Release of an N-terminal amino acid, preferentially leucine, but not glutamic or aspartic acids.. Functionally, presumably involved in the processing and regular turnover of intracellular proteins. Catalyzes the removal of unsubstituted N-terminal amino acids from various peptides. The sequence is that of Cytosol aminopeptidase (pepA) from Helicobacter pylori (strain J99 / ATCC 700824) (Campylobacter pylori J99).